The chain runs to 707 residues: Polyribonucleotide nucleotidyltransferase (707 aa).

Mg(2+)-binding residues include Asp-484 and Asp-490. Positions 551 to 610 (PRVVRMVVNPEKIRDIIGPAGKTITKIISETGVKIDIEEDGRLYITAPNLEAGERAKQMI) constitute a KH domain. In terms of domain architecture, S1 motif spans 620-688 (GGIYLGKVLR…KLGRIVLSRK (69 aa)). Residues 688 to 707 (KDAMPDEEESDNRKSDNRKK) form a disordered region. A compositionally biased stretch (basic and acidic residues) spans 698-707 (DNRKSDNRKK).

Belongs to the polyribonucleotide nucleotidyltransferase family. It depends on Mg(2+) as a cofactor.

Its subcellular location is the cytoplasm. It carries out the reaction RNA(n+1) + phosphate = RNA(n) + a ribonucleoside 5'-diphosphate. Functionally, involved in mRNA degradation. Catalyzes the phosphorolysis of single-stranded polyribonucleotides processively in the 3'- to 5'-direction. In Caldanaerobacter subterraneus subsp. tengcongensis (strain DSM 15242 / JCM 11007 / NBRC 100824 / MB4) (Thermoanaerobacter tengcongensis), this protein is Polyribonucleotide nucleotidyltransferase.